The sequence spans 196 residues: N-(5'-phosphoribosyl)anthranilate isomerase (196 aa).

The protein belongs to the TrpF family.

It catalyses the reaction N-(5-phospho-beta-D-ribosyl)anthranilate = 1-(2-carboxyphenylamino)-1-deoxy-D-ribulose 5-phosphate. It functions in the pathway amino-acid biosynthesis; L-tryptophan biosynthesis; L-tryptophan from chorismate: step 3/5. This Nitratiruptor sp. (strain SB155-2) protein is N-(5'-phosphoribosyl)anthranilate isomerase.